Here is a 154-residue protein sequence, read N- to C-terminus: D-aminoacyl-tRNA deacylase (154 aa).

A Gly-cisPro motif, important for rejection of L-amino acids motif is present at residues 137 to 138 (GP).

Belongs to the DTD family. In terms of assembly, homodimer.

The protein resides in the cytoplasm. It carries out the reaction glycyl-tRNA(Ala) + H2O = tRNA(Ala) + glycine + H(+). The catalysed reaction is a D-aminoacyl-tRNA + H2O = a tRNA + a D-alpha-amino acid + H(+). An aminoacyl-tRNA editing enzyme that deacylates mischarged D-aminoacyl-tRNAs. Also deacylates mischarged glycyl-tRNA(Ala), protecting cells against glycine mischarging by AlaRS. Acts via tRNA-based rather than protein-based catalysis; rejects L-amino acids rather than detecting D-amino acids in the active site. By recycling D-aminoacyl-tRNA to D-amino acids and free tRNA molecules, this enzyme counteracts the toxicity associated with the formation of D-aminoacyl-tRNA entities in vivo and helps enforce protein L-homochirality. The protein is D-aminoacyl-tRNA deacylase of Thermomicrobium roseum (strain ATCC 27502 / DSM 5159 / P-2).